The chain runs to 403 residues: F-box protein At2g40925 (403 aa).

The region spanning 21-71 (NRHDCEIPPDLMIEILIRLPTKSFMRFKCVSKQWSPLISGRYFCNRLFTCV) is the F-box domain.

In Arabidopsis thaliana (Mouse-ear cress), this protein is F-box protein At2g40925.